The chain runs to 495 residues: Putative aldehyde dehydrogenase AldA (495 aa).

NAD(+) is bound at residue 212-218; it reads GKGSESG. Residues glutamate 256 and cysteine 290 contribute to the active site.

The protein belongs to the aldehyde dehydrogenase family.

The enzyme catalyses an aldehyde + NAD(+) + H2O = a carboxylate + NADH + 2 H(+). In Staphylococcus aureus (strain USA300), this protein is Putative aldehyde dehydrogenase AldA (aldA).